Here is a 76-residue protein sequence, read N- to C-terminus: MSSTTVTKKDQKTVVEKKETEEEEFEEFPIQEWPERADGEDDEVNVWEDNWDDETHESEFSKQLKEELRKGGHPIA.

Disordered regions lie at residues 1–28 (MSSTTVTKKDQKTVVEKKETEEEEFEEF) and 52–76 (DDETHESEFSKQLKEELRKGGHPIA). Composition is skewed to basic and acidic residues over residues 7 to 20 (TKKDQKTVVEKKET) and 57 to 70 (ESEFSKQLKEELRK).

Belongs to the DSS1/SEM1 family. In terms of assembly, part of the 26S proteasome.

Its subcellular location is the nucleus. It is found in the cytoplasm. Subunit of the 26S proteasome which plays a role in ubiquitin-dependent proteolysis. Has an essential role in oogenesis and larval growth. Required for intestinal function and default lifespan. The polypeptide is Probable 26S proteasome complex subunit dss-1 (Caenorhabditis briggsae).